The following is a 116-amino-acid chain: Iron-sulfur cluster insertion protein ErpA (116 aa).

Iron-sulfur cluster contacts are provided by cysteine 44, cysteine 108, and cysteine 110.

Belongs to the HesB/IscA family. As to quaternary structure, homodimer. Iron-sulfur cluster serves as cofactor.

Required for insertion of 4Fe-4S clusters for at least IspG. The chain is Iron-sulfur cluster insertion protein ErpA from Shewanella loihica (strain ATCC BAA-1088 / PV-4).